The chain runs to 320 residues: tRNA-cytidine(32) 2-sulfurtransferase (320 aa).

The short motif at 54–59 (SGGKDS) is the PP-loop motif element. [4Fe-4S] cluster is bound by residues Cys-129, Cys-132, and Cys-220.

It belongs to the TtcA family. Homodimer. The cofactor is Mg(2+). [4Fe-4S] cluster serves as cofactor.

It is found in the cytoplasm. The enzyme catalyses cytidine(32) in tRNA + S-sulfanyl-L-cysteinyl-[cysteine desulfurase] + AH2 + ATP = 2-thiocytidine(32) in tRNA + L-cysteinyl-[cysteine desulfurase] + A + AMP + diphosphate + H(+). The protein operates within tRNA modification. Catalyzes the ATP-dependent 2-thiolation of cytidine in position 32 of tRNA, to form 2-thiocytidine (s(2)C32). The sulfur atoms are provided by the cysteine/cysteine desulfurase (IscS) system. This chain is tRNA-cytidine(32) 2-sulfurtransferase, found in Bordetella parapertussis (strain 12822 / ATCC BAA-587 / NCTC 13253).